We begin with the raw amino-acid sequence, 364 residues long: Aminomethyltransferase (364 aa).

Belongs to the GcvT family. The glycine cleavage system is composed of four proteins: P, T, L and H.

The catalysed reaction is N(6)-[(R)-S(8)-aminomethyldihydrolipoyl]-L-lysyl-[protein] + (6S)-5,6,7,8-tetrahydrofolate = N(6)-[(R)-dihydrolipoyl]-L-lysyl-[protein] + (6R)-5,10-methylene-5,6,7,8-tetrahydrofolate + NH4(+). In terms of biological role, the glycine cleavage system catalyzes the degradation of glycine. This chain is Aminomethyltransferase, found in Escherichia coli O157:H7.